The chain runs to 448 residues: DNA repair protein RadA (448 aa).

Residues 10-27 form a C4-type zinc finger; that stretch reads CQHCGFTSPKWLGKCVQC. 96–103 is an ATP binding site; that stretch reads GSPGVGKS. Residues 253–257 carry the RadA KNRFG motif motif; the sequence is KNRFG. Positions 351-448 are lon-protease-like; sequence DVFINVSGGI…NAVGKIVEWM (98 aa).

It belongs to the RecA family. RadA subfamily.

In terms of biological role, DNA-dependent ATPase involved in processing of recombination intermediates, plays a role in repairing DNA breaks. Stimulates the branch migration of RecA-mediated strand transfer reactions, allowing the 3' invading strand to extend heteroduplex DNA faster. Binds ssDNA in the presence of ADP but not other nucleotides, has ATPase activity that is stimulated by ssDNA and various branched DNA structures, but inhibited by SSB. Does not have RecA's homology-searching function. This is DNA repair protein RadA from Helicobacter pylori (strain ATCC 700392 / 26695) (Campylobacter pylori).